We begin with the raw amino-acid sequence, 1416 residues long: DNA-directed RNA polymerase subunit beta' (1416 aa).

Cysteine 71, cysteine 73, cysteine 86, and cysteine 89 together coordinate Zn(2+). Mg(2+) contacts are provided by aspartate 461, aspartate 463, and aspartate 465. 4 residues coordinate Zn(2+): cysteine 815, cysteine 889, cysteine 896, and cysteine 899.

This sequence belongs to the RNA polymerase beta' chain family. In terms of assembly, the RNAP catalytic core consists of 2 alpha, 1 beta, 1 beta' and 1 omega subunit. When a sigma factor is associated with the core the holoenzyme is formed, which can initiate transcription. Mg(2+) is required as a cofactor. Requires Zn(2+) as cofactor.

The enzyme catalyses RNA(n) + a ribonucleoside 5'-triphosphate = RNA(n+1) + diphosphate. Its function is as follows. DNA-dependent RNA polymerase catalyzes the transcription of DNA into RNA using the four ribonucleoside triphosphates as substrates. The chain is DNA-directed RNA polymerase subunit beta' from Haemophilus influenzae (strain PittGG).